Here is a 238-residue protein sequence, read N- to C-terminus: Leucyl/phenylalanyl-tRNA--protein transferase (238 aa).

This sequence belongs to the L/F-transferase family.

The protein resides in the cytoplasm. It carries out the reaction N-terminal L-lysyl-[protein] + L-leucyl-tRNA(Leu) = N-terminal L-leucyl-L-lysyl-[protein] + tRNA(Leu) + H(+). The enzyme catalyses N-terminal L-arginyl-[protein] + L-leucyl-tRNA(Leu) = N-terminal L-leucyl-L-arginyl-[protein] + tRNA(Leu) + H(+). It catalyses the reaction L-phenylalanyl-tRNA(Phe) + an N-terminal L-alpha-aminoacyl-[protein] = an N-terminal L-phenylalanyl-L-alpha-aminoacyl-[protein] + tRNA(Phe). Its function is as follows. Functions in the N-end rule pathway of protein degradation where it conjugates Leu, Phe and, less efficiently, Met from aminoacyl-tRNAs to the N-termini of proteins containing an N-terminal arginine or lysine. The sequence is that of Leucyl/phenylalanyl-tRNA--protein transferase from Pseudoalteromonas translucida (strain TAC 125).